The chain runs to 226 residues: Ribonuclease 3 (226 aa).

An RNase III domain is found at 6 to 128 (MKKLQKFIGY…IIASIFLDSN (123 aa)). Residue Glu41 coordinates Mg(2+). The active site involves Asp45. Positions 114 and 117 each coordinate Mg(2+). Residue Glu117 is part of the active site. Residues 155–225 (DPKTRLQEYL…AQNALIRLEV (71 aa)) enclose the DRBM domain.

This sequence belongs to the ribonuclease III family. Homodimer. The cofactor is Mg(2+).

Its subcellular location is the cytoplasm. The catalysed reaction is Endonucleolytic cleavage to 5'-phosphomonoester.. In terms of biological role, digests double-stranded RNA. Involved in the processing of primary rRNA transcript to yield the immediate precursors to the large and small rRNAs (23S and 16S). Processes some mRNAs, and tRNAs when they are encoded in the rRNA operon. Processes pre-crRNA and tracrRNA of type II CRISPR loci if present in the organism. The protein is Ribonuclease 3 of Buchnera aphidicola subsp. Cinara cedri (strain Cc).